A 152-amino-acid polypeptide reads, in one-letter code: UPF0225 protein YchJ (152 aa).

The protein belongs to the UPF0225 family.

In Salmonella typhimurium (strain LT2 / SGSC1412 / ATCC 700720), this protein is UPF0225 protein YchJ (ychJ).